The chain runs to 106 residues: ATP-dependent Clp protease adapter protein ClpS (106 aa).

This sequence belongs to the ClpS family. As to quaternary structure, binds to the N-terminal domain of the chaperone ClpA.

In terms of biological role, involved in the modulation of the specificity of the ClpAP-mediated ATP-dependent protein degradation. This Salmonella agona (strain SL483) protein is ATP-dependent Clp protease adapter protein ClpS.